The sequence spans 376 residues: Endoplasmic reticulum-Golgi intermediate compartment protein 2 (376 aa).

At 1 to 33 (MRRLNKKKALNFVRELDAFPKVPESYVETTASG) the chain is on the cytoplasmic side. Residues 34 to 54 (GTVSLLAFTAMALLAFFEFFV) traverse the membrane as a helical segment. Residues 55–318 (YRDTWMKYEY…PFWQFLVRLC (264 aa)) are Lumenal-facing. The chain crosses the membrane as a helical span at residues 319–339 (GIIGGIFSTTGMLHNLVGFCV). The Cytoplasmic portion of the chain corresponds to 340–376 (DVVCCRFKLGVYKPKSMSDFDGQINSLTPLLSENAEQ).

This sequence belongs to the ERGIC family.

The protein localises to the endoplasmic reticulum-Golgi intermediate compartment membrane. It is found in the golgi apparatus. The protein resides in the cis-Golgi network membrane. It localises to the endoplasmic reticulum membrane. Possible role in transport between endoplasmic reticulum and Golgi. The polypeptide is Endoplasmic reticulum-Golgi intermediate compartment protein 2 (ergic2) (Danio rerio (Zebrafish)).